A 117-amino-acid polypeptide reads, in one-letter code: Large ribosomal subunit protein uL18 (117 aa).

It belongs to the universal ribosomal protein uL18 family. Part of the 50S ribosomal subunit; part of the 5S rRNA/L5/L18/L25 subcomplex. Contacts the 5S and 23S rRNAs.

Its function is as follows. This is one of the proteins that bind and probably mediate the attachment of the 5S RNA into the large ribosomal subunit, where it forms part of the central protuberance. This Methylococcus capsulatus (strain ATCC 33009 / NCIMB 11132 / Bath) protein is Large ribosomal subunit protein uL18.